The following is a 653-amino-acid chain: UvrABC system protein C (653 aa).

One can recognise a GIY-YIG domain in the interval Asn44–Val122. The UVR domain maps to Ser232–Val267.

Belongs to the UvrC family. Interacts with UvrB in an incision complex.

The protein resides in the cytoplasm. Functionally, the UvrABC repair system catalyzes the recognition and processing of DNA lesions. UvrC both incises the 5' and 3' sides of the lesion. The N-terminal half is responsible for the 3' incision and the C-terminal half is responsible for the 5' incision. The protein is UvrABC system protein C of Chelativorans sp. (strain BNC1).